A 218-amino-acid polypeptide reads, in one-letter code: MTQDEMKKAAGWAALKYVEKGSIVGVGTGSTVNHFIDALGSIKDDIKGAVSSSVASTERLKELGIEVYECNDVAMLDIYVDGADEINAAREMIKGGGAALTREKIVAAISEKFVCIVDGTKAVDVLGQFPLPVEVIPMARSYVARELVKLGGDPAYREGVTTDNGNVILDVHNMQITNPKELEDKINGIAGVVTVGLFAHRGADVVITGTPEGAKIEE.

Residues 28-31 (TGST), 81-84 (DGAD), and 94-97 (KGGG) each bind substrate. Catalysis depends on glutamate 103, which acts as the Proton acceptor. A substrate-binding site is contributed by lysine 121.

The protein belongs to the ribose 5-phosphate isomerase family. As to quaternary structure, homodimer.

It catalyses the reaction aldehydo-D-ribose 5-phosphate = D-ribulose 5-phosphate. Its pathway is carbohydrate degradation; pentose phosphate pathway; D-ribose 5-phosphate from D-ribulose 5-phosphate (non-oxidative stage): step 1/1. Its function is as follows. Catalyzes the reversible conversion of ribose-5-phosphate to ribulose 5-phosphate. The polypeptide is Ribose-5-phosphate isomerase A (Vibrio campbellii (strain ATCC BAA-1116)).